We begin with the raw amino-acid sequence, 394 residues long: Elongation factor Tu 2 (394 aa).

Residues 10 to 204 enclose the tr-type G domain; the sequence is KPHVNVGTIG…YLDTYIPEPE (195 aa). Residues 19-26 are G1; that stretch reads GHVDHGKT. 19 to 26 lines the GTP pocket; sequence GHVDHGKT. A Mg(2+)-binding site is contributed by Thr26. Positions 60-64 are G2; that stretch reads GITIN. The interval 81-84 is G3; it reads DCPG. Residues 81 to 85 and 136 to 139 contribute to the GTP site; these read DCPGH and NKCD. Residues 136-139 are G4; it reads NKCD. The G5 stretch occupies residues 174 to 176; the sequence is SAL.

The protein belongs to the TRAFAC class translation factor GTPase superfamily. Classic translation factor GTPase family. EF-Tu/EF-1A subfamily. Monomer.

Its subcellular location is the cytoplasm. It catalyses the reaction GTP + H2O = GDP + phosphate + H(+). Its function is as follows. GTP hydrolase that promotes the GTP-dependent binding of aminoacyl-tRNA to the A-site of ribosomes during protein biosynthesis. The protein is Elongation factor Tu 2 of Yersinia enterocolitica serotype O:8 / biotype 1B (strain NCTC 13174 / 8081).